Consider the following 208-residue polypeptide: Uracil phosphoribosyltransferase (208 aa).

5-phospho-alpha-D-ribose 1-diphosphate contacts are provided by residues Arg-78, Arg-103, and Asp-130–Ser-138. Residues Ile-193 and Gly-198–Ala-200 each bind uracil. Residue Asp-199 coordinates 5-phospho-alpha-D-ribose 1-diphosphate.

This sequence belongs to the UPRTase family. Mg(2+) is required as a cofactor.

The enzyme catalyses UMP + diphosphate = 5-phospho-alpha-D-ribose 1-diphosphate + uracil. Its pathway is pyrimidine metabolism; UMP biosynthesis via salvage pathway; UMP from uracil: step 1/1. Allosterically activated by GTP. Its function is as follows. Catalyzes the conversion of uracil and 5-phospho-alpha-D-ribose 1-diphosphate (PRPP) to UMP and diphosphate. The protein is Uracil phosphoribosyltransferase of Proteus mirabilis (strain HI4320).